The primary structure comprises 340 residues: Probable D,D-dipeptide transport system permease protein DdpB (340 aa).

Residues 1-11 (MTFWSILRQRC) lie on the Periplasmic side of the membrane. The helical transmembrane segment at 12 to 32 (WGLVLVVAGVCVITFIISHLI) threads the bilayer. Residues 33–104 (PGDPARLLAG…IFFPATLELA (72 aa)) are Cytoplasmic-facing. Positions 97–327 (FPATLELAFG…LVNLVVDLLY (231 aa)) constitute an ABC transmembrane type-1 domain. A helical transmembrane segment spans residues 105-125 (FGALLLALLIGIPLGILSAVW). The Periplasmic portion of the chain corresponds to 126–135 (RNRWLDHLVR). A helical membrane pass occupies residues 136–156 (IMAITGISTPAFWLGLGVIVL). Topologically, residues 157 to 199 (FYGHLQILPGGGRLDDWLDPPTHVTGFYLLDALLEGNGEVFFN) are cytoplasmic. The chain crosses the membrane as a helical span at residues 200 to 220 (ALQHLILPALTLAFVHLGIVA). The Periplasmic segment spans residues 221–246 (RQIRSAMLEQLSEDYIRTARASGLPG). A helical transmembrane segment spans residues 247–269 (WYIVLCYALPNALIPSITVLGLA). Residues 270 to 279 (LGDLLYGAVL) lie on the Cytoplasmic side of the membrane. A helical transmembrane segment spans residues 280–300 (TETVFAWPGMGAWVVTSIQAL). Position 301 (aspartate 301) is a topological domain, periplasmic. Residues 302 to 322 (FPAVMGFAVVVSFAYVLVNLV) form a helical membrane-spanning segment. At 323 to 340 (VDLLYLWIDPRIGRGGGE) the chain is on the cytoplasmic side.

The protein belongs to the binding-protein-dependent transport system permease family. OppBC subfamily. In terms of assembly, the complex is composed of two ATP-binding proteins (DdpD and DdpF), two transmembrane proteins (DdpB and DdpC) and a solute-binding protein (DdpA).

The protein localises to the cell inner membrane. In terms of biological role, part of the ABC transporter complex DdpABCDF, which is probably involved in D,D-dipeptide transport. Probably responsible for the translocation of the substrate across the membrane. The chain is Probable D,D-dipeptide transport system permease protein DdpB (ddpB) from Escherichia coli (strain K12).